The sequence spans 1757 residues: 1-phosphatidylinositol-3-phosphate 5-kinase FAB1A (1757 aa).

An FYVE-type zinc finger spans residues 36–102 (DQSCPVCYEC…VCNYCYKQWE (67 aa)). Zn(2+) is bound by residues Cys-42, Cys-45, Cys-58, Cys-61, Cys-66, Cys-69, Cys-94, and Cys-97. Disordered stretches follow at residues 125 to 193 (ARSV…SDNQ), 276 to 297 (KTRQQENGWNDVKEGSPPCEES), 313 to 346 (LPPEPENEEDEREAVLSDDDGDEGDRGDWGYLRP), and 684 to 709 (AEKSPTTELRGEPHKANGDLTGNFTS). A compositionally biased stretch (polar residues) spans 134–145 (NSSNCTIDSTAG). Residues 317-337 (PENEEDEREAVLSDDDGDEGD) show a composition bias toward acidic residues. Residues 1014-1087 (LQKESKEVIK…LQQMLNVVKD (74 aa)) adopt a coiled-coil conformation. The region spanning 1395-1719 (SFSLFDSVNL…RFRKAMTAYF (325 aa)) is the PIPK domain. Low complexity predominate over residues 1729 to 1739 (AAVVPSNSSSA). Residues 1729-1757 (AAVVPSNSSSAEVKEEEEKDNPQAVGNKS) are disordered.

In terms of assembly, component of the PI(3,5)P2 regulatory complex at least composed of ATG18, SAC/FIG4, FAB1 and VAC14. It depends on Mg(2+) as a cofactor. Mn(2+) serves as cofactor. As to expression, ubiquitous with highest expression levels in pollen, seed, and senescent leaves.

Its subcellular location is the endosome membrane. The catalysed reaction is a 1,2-diacyl-sn-glycero-3-phospho-(1D-myo-inositol-3-phosphate) + ATP = a 1,2-diacyl-sn-glycero-3-phospho-(1D-myo-inositol-3,5-bisphosphate) + ADP + H(+). Functionally, the PI(3,5)P2 regulatory complex regulates both the synthesis and turnover of phosphatidylinositol 3,5-bisphosphate (PtdIns(3,5)P2). Catalyzes the phosphorylation of phosphatidylinositol 3-phosphate on the fifth hydroxyl of the myo-inositol ring, to form phosphatidylinositol 3,5-bisphosphate. Plays an important role in maintenance of endomembrane homeostasis including endocytosis, vacuole formation, and vacuolar acidification processes. Required for development of viable pollen. Might mediate recycling of auxin transporters. The chain is 1-phosphatidylinositol-3-phosphate 5-kinase FAB1A (FAB1A) from Arabidopsis thaliana (Mouse-ear cress).